A 465-amino-acid chain; its full sequence is Serine/threonine-protein kinase 38 (465 aa).

Ala2 is modified (N-acetylalanine). Positions 62–87 (KRLRRSAHARKETEFLRLKRTRLGLE) are interaction with S100B. Position 74 is a phosphothreonine (Thr74). The Protein kinase domain maps to 89-382 (FESLKVIGRG…VEEIKSNSFF (294 aa)). ATP contacts are provided by residues 95-103 (IGRGAFGEV) and Lys118. The Proton acceptor role is filled by Asp212. At Ser264 the chain carries Phosphoserine. At Ser281 the chain carries Phosphoserine; by autocatalysis. The short motif at 306–311 (WSLGVI) is the UFM1-interacting motif (UFIM) element. The AGC-kinase C-terminal domain occupies 383–455 (EGVDWEHIRE…KRFEGLTARG (73 aa)). Thr444 carries the phosphothreonine; by STK24/MST3 modification.

Belongs to the protein kinase superfamily. AGC Ser/Thr protein kinase family. Homodimeric S100B binds two molecules of STK38. Interacts with MOB1 and MOB2. Interacts with MAP3K1 and MAP3K2 (via the kinase catalytic domain). Forms a tripartite complex with MOBKL1B and STK3/MST2. Interacts with MICAL1; leading to inhibit the protein kinase activity by antagonizing activation by MST1/STK4. Mg(2+) serves as cofactor. In terms of processing, ISGylated. Post-translationally, phosphorylated by STK3/MST2 and this is enhanced by MOBKL1B. As to expression, ubiquitously expressed with highest levels observed in peripheral blood leukocytes.

Its subcellular location is the nucleus. It is found in the cytoplasm. The protein localises to the chromosome. It catalyses the reaction L-seryl-[protein] + ATP = O-phospho-L-seryl-[protein] + ADP + H(+). The catalysed reaction is L-threonyl-[protein] + ATP = O-phospho-L-threonyl-[protein] + ADP + H(+). Its activity is regulated as follows. Activated by binding of S100B which releases autoinhibitory N-lobe interactions, enabling ATP to bind and the autophosphorylation of Ser-281. Thr-444 then undergoes calcium-dependent phosphorylation by STK24/MST3. Interactions between phosphorylated Thr-444 and the N-lobe promote additional structural changes that complete the activation of the kinase. Autoinhibition is also released by the binding of MOB1/MOBKL1A and MOB2/HCCA2 to the N-terminal of STK38. In terms of biological role, serine/threonine-protein kinase that acts as a negative regulator of MAP3K1/2 signaling. Converts MAP3K2 from its phosphorylated form to its non-phosphorylated form and inhibits autophosphorylation of MAP3K2. Acts as an ufmylation 'reader' in a kinase-independent manner: specifically recognizes and binds mono-ufmylated histone H4 in response to DNA damage, promoting the recruitment of SUV39H1 to the double-strand breaks, resulting in ATM activation. This chain is Serine/threonine-protein kinase 38, found in Homo sapiens (Human).